The primary structure comprises 561 residues: Carbohydrate sulfotransferase 15 (561 aa).

The Cytoplasmic portion of the chain corresponds to 1–80; sequence MRHCINCCIQ…FLRFRKGKRC (80 aa). A helical; Signal-anchor for type II membrane protein transmembrane segment spans residues 81 to 101; that stretch reads SLVFGLIIMTLVMASYILSGA. At 102–561 the chain is on the lumenal side; the sequence is HQELLISSPF…DDEAFAWKTT (460 aa). 263–267 contacts 3'-phosphoadenylyl sulfate; the sequence is KCGTT. A glycan (N-linked (GlcNAc...) asparagine) is linked at Asn364. Arg392 and Ser400 together coordinate 3'-phosphoadenylyl sulfate.

Belongs to the sulfotransferase 1 family. As to quaternary structure, homodimer; disulfide-linked (Potential). The relevance of homodimerization is however unsure. May interact with phosphorylated proteins in resting B-cells, including HCK. A divalent metal cation serves as cofactor. Glutathione is required as a cofactor. Post-translationally, glycosylated.

The protein localises to the golgi apparatus membrane. It catalyses the reaction dermatan 4'-sulfate + n 3'-phosphoadenylyl sulfate = dermatan 4',6'-bissulfate + n adenosine 3',5'-bisphosphate + n H(+). The catalysed reaction is chondroitin 4'-sulfate + n 3'-phosphoadenylyl sulfate = chondroitin 4',6'-bissulfate + n adenosine 3',5'-bisphosphate + n H(+). With respect to regulation, inhibited by phenyl beta-GalNAc(4,6-SO(4)). Its function is as follows. Sulfotransferase that transfers sulfate from 3'-phosphoadenosine 5'-phosphosulfate (PAPS) to the C-6 hydroxyl group of the GalNAc 4-sulfate residue of chondroitin sulfate A and forms chondroitin sulfate E containing GlcA-GalNAc(4,6-SO(4)) repeating units. It also transfers sulfate to a unique non-reducing terminal sequence, GalNAc(4SO4)-GlcA(2SO4)-GalNAc(6SO4), to yield a highly sulfated structure similar to the structure found in thrombomodulin chondroitin sulfate. May also act as a B-cell receptor involved in BCR ligation-mediated early activation that mediate regulatory signals key to B-cell development and/or regulation of B-cell-specific RAG expression; however such results are unclear in vivo. The polypeptide is Carbohydrate sulfotransferase 15 (Chst15) (Rattus norvegicus (Rat)).